The following is a 159-amino-acid chain: Nascent polypeptide-associated complex subunit beta (159 aa).

Disordered stretches follow at residues 1–39 and 121–159; these read MDMEKLKRMQARGGVRTGDGKGTPRRKVKNVHKSTGMDD and ESYQSMQKAEGGEDKKDDDEDDDDIPDLVEGENFEDKVE. Residues 23 to 32 show a composition bias toward basic residues; that stretch reads TPRRKVKNVH. Positions 36 to 101 constitute an NAC-A/B domain; sequence GMDDKKLQTS…GEDKELTELV (66 aa). Over residues 136 to 153 the composition is skewed to acidic residues; that stretch reads KDDDEDDDDIPDLVEGEN.

It belongs to the NAC-beta family. Part of the nascent polypeptide-associated complex (NAC), consisting of EGD2 and EGD1. NAC associates with ribosomes via EGD1.

The protein localises to the cytoplasm. The protein resides in the nucleus. Its function is as follows. Component of the nascent polypeptide-associated complex (NAC), a dynamic component of the ribosomal exit tunnel, protecting the emerging polypeptides from interaction with other cytoplasmic proteins to ensure appropriate nascent protein targeting. The NAC complex also promotes mitochondrial protein import by enhancing productive ribosome interactions with the outer mitochondrial membrane and blocks the inappropriate interaction of ribosomes translating non-secretory nascent polypeptides with translocation sites in the membrane of the endoplasmic reticulum. EGD1 may act as a transcription factor that exert a negative effect on the expression of several genes that are transcribed by RNA polymerase II. The protein is Nascent polypeptide-associated complex subunit beta (egd1) of Botryotinia fuckeliana (strain B05.10) (Noble rot fungus).